The following is a 143-amino-acid chain: Nucleoside diphosphate kinase 2 (143 aa).

The ATP site is built by Lys-11, Phe-59, Arg-87, Thr-93, Arg-104, and Asn-114. Residue His-117 is the Pros-phosphohistidine intermediate of the active site.

Belongs to the NDK family. In terms of assembly, homotetramer. Mg(2+) is required as a cofactor.

It localises to the cytoplasm. It carries out the reaction a 2'-deoxyribonucleoside 5'-diphosphate + ATP = a 2'-deoxyribonucleoside 5'-triphosphate + ADP. The enzyme catalyses a ribonucleoside 5'-diphosphate + ATP = a ribonucleoside 5'-triphosphate + ADP. Major role in the synthesis of nucleoside triphosphates other than ATP. The ATP gamma phosphate is transferred to the NDP beta phosphate via a ping-pong mechanism, using a phosphorylated active-site intermediate. In Protochlamydia amoebophila (strain UWE25), this protein is Nucleoside diphosphate kinase 2.